Here is a 174-residue protein sequence, read N- to C-terminus: Guided entry of tail-anchored proteins factor 1 (174 aa).

Topologically, residues 1–8 (MSSAAADH) are lumenal. The helical transmembrane segment at 9-29 (WAWLLVLSFVFGCNVLRVLLP) threads the bilayer. At 30-99 (SFSSFMSRVL…VKARTAQLAK (70 aa)) the chain is on the cytoplasmic side. Residues 39 to 94 (LQKDAEQESQMRAEIQDMKQELSTVNMMDEFARYARLERKINKMTDKLKTHVKART) adopt a coiled-coil conformation. An interaction with GET3/TRC40 region spans residues 39-97 (LQKDAEQESQMRAEIQDMKQELSTVNMMDEFARYARLERKINKMTDKLKTHVKARTAQL). Residues 100–120 (IKWVISVAFYVLQAALMISLI) form a helical membrane-spanning segment. Residues 121 to 148 (WKYYSVPVAVVPSKWITPLDRLVAFPTR) are Lumenal-facing. The helical transmembrane segment at 149–169 (VAGGVGITCWILVCNKVVAIV) threads the bilayer. Residues 170–174 (LHPFS) lie on the Cytoplasmic side of the membrane.

This sequence belongs to the WRB/GET1 family. As to quaternary structure, component of the Golgi to ER traffic (GET) complex, which is composed of GET1/WRB, CAMLG/GET2 and GET3. Within the complex, GET1 and CAMLG form a heterotetramer which is stabilized by phosphatidylinositol binding and which binds to the GET3 homodimer. Interacts with CAMLG (via C-terminus). GET3 shows a higher affinity for CAMLG than for GET1.

It localises to the endoplasmic reticulum membrane. In terms of biological role, required for the post-translational delivery of tail-anchored (TA) proteins to the endoplasmic reticulum. Together with CAMLG/GET2, acts as a membrane receptor for soluble GET3/TRC40, which recognizes and selectively binds the transmembrane domain of TA proteins in the cytosol. Required to ensure correct topology and ER insertion of CAMLG. The sequence is that of Guided entry of tail-anchored proteins factor 1 from Pongo abelii (Sumatran orangutan).